Reading from the N-terminus, the 140-residue chain is Nucleoside diphosphate kinase (140 aa).

ATP is bound by residues Lys11, Phe59, Arg87, Thr93, Arg104, and Asn114. The active-site Pros-phosphohistidine intermediate is the His117.

This sequence belongs to the NDK family. As to quaternary structure, homotetramer. Mg(2+) is required as a cofactor.

It is found in the cytoplasm. It catalyses the reaction a 2'-deoxyribonucleoside 5'-diphosphate + ATP = a 2'-deoxyribonucleoside 5'-triphosphate + ADP. It carries out the reaction a ribonucleoside 5'-diphosphate + ATP = a ribonucleoside 5'-triphosphate + ADP. Major role in the synthesis of nucleoside triphosphates other than ATP. The ATP gamma phosphate is transferred to the NDP beta phosphate via a ping-pong mechanism, using a phosphorylated active-site intermediate. This is Nucleoside diphosphate kinase from Methylobacterium sp. (strain 4-46).